A 232-amino-acid chain; its full sequence is Lipoprotein-releasing system ATP-binding protein LolD 1 (232 aa).

One can recognise an ABC transporter domain in the interval 11–231 (VYLHDVKRQY…SIQDGLVVEL (221 aa)). An ATP-binding site is contributed by 47–54 (APSGAGKS).

This sequence belongs to the ABC transporter superfamily. Lipoprotein translocase (TC 3.A.1.125) family. The complex is composed of two ATP-binding proteins (LolD) and two transmembrane proteins (LolC and LolE).

The protein localises to the cell inner membrane. In terms of biological role, part of the ABC transporter complex LolCDE involved in the translocation of mature outer membrane-directed lipoproteins, from the inner membrane to the periplasmic chaperone, LolA. Responsible for the formation of the LolA-lipoprotein complex in an ATP-dependent manner. This chain is Lipoprotein-releasing system ATP-binding protein LolD 1, found in Rhodopseudomonas palustris (strain BisB18).